A 307-amino-acid chain; its full sequence is Heparan sulfate glucosamine 3-O-sulfotransferase 1 (307 aa).

The first 20 residues, 1-20, serve as a signal peptide directing secretion; sequence MAALLLGAVLLVAQPQLVPS. An N-linked (GlcNAc...) asparagine glycan is attached at Asn48. 3'-phosphoadenylyl sulfate contacts are provided by residues 64 to 68, Arg147, and Ser155; that span reads KGGTR. Residues Asn192, Asn242, and Asn249 are each glycosylated (N-linked (GlcNAc...) asparagine). Position 255 (Tyr255) interacts with 3'-phosphoadenylyl sulfate. Cysteines 256 and 265 form a disulfide. 270-274 provides a ligand contact to 3'-phosphoadenylyl sulfate; it reads KGRAH.

The protein belongs to the sulfotransferase 1 family. In terms of tissue distribution, highly expressed in the brain and kidney and weakly expressed in the heart, lung and placenta.

Its subcellular location is the golgi apparatus lumen. The enzyme catalyses alpha-D-glucosaminyl-[heparan sulfate](n) + 3'-phosphoadenylyl sulfate = 3-sulfo-alpha-D-glucosaminyl-[heparan sulfate](n) + adenosine 3',5'-bisphosphate + H(+). Its function is as follows. Sulfotransferase that utilizes 3'-phospho-5'-adenylyl sulfate (PAPS) to catalyze the transfer of a sulfo group to position 3 of glucosamine residues in heparan. Catalyzes the rate limiting step in the biosynthesis of heparan sulfate (HSact). This modification is a crucial step in the biosynthesis of anticoagulant heparan sulfate as it completes the structure of the antithrombin pentasaccharide binding site. This Homo sapiens (Human) protein is Heparan sulfate glucosamine 3-O-sulfotransferase 1 (HS3ST1).